Reading from the N-terminus, the 133-residue chain is Large ribosomal subunit protein eL19 (133 aa).

A disordered region spans residues 55–83; the sequence is RGISGARKKPRRKGPGSRKGGKYSKLPRK. Residues 60 to 83 are compositionally biased toward basic residues; sequence ARKKPRRKGPGSRKGGKYSKLPRK.

It belongs to the eukaryotic ribosomal protein eL19 family. In terms of assembly, part of the 50S ribosomal subunit.

Functionally, binds to the 23S rRNA. This chain is Large ribosomal subunit protein eL19, found in Korarchaeum cryptofilum (strain OPF8).